We begin with the raw amino-acid sequence, 916 residues long: DNA gyrase subunit A (916 aa).

The region spanning 42-544 (LPDVRDGLKP…FGGDIADEDL (503 aa)) is the Topo IIA-type catalytic domain. The active-site O-(5'-phospho-DNA)-tyrosine intermediate is Y130. The short motif at 571–577 (QRRGGRG) is the GyrA-box element. Residues 739–748 (SDDLEDETAD) show a composition bias toward acidic residues. Disordered regions lie at residues 739 to 774 (SDDL…RGMR) and 897 to 916 (ESEL…EAEN).

The protein belongs to the type II topoisomerase GyrA/ParC subunit family. As to quaternary structure, heterotetramer, composed of two GyrA and two GyrB chains. In the heterotetramer, GyrA contains the active site tyrosine that forms a transient covalent intermediate with DNA, while GyrB binds cofactors and catalyzes ATP hydrolysis.

The protein resides in the cytoplasm. The enzyme catalyses ATP-dependent breakage, passage and rejoining of double-stranded DNA.. Functionally, a type II topoisomerase that negatively supercoils closed circular double-stranded (ds) DNA in an ATP-dependent manner to modulate DNA topology and maintain chromosomes in an underwound state. Negative supercoiling favors strand separation, and DNA replication, transcription, recombination and repair, all of which involve strand separation. Also able to catalyze the interconversion of other topological isomers of dsDNA rings, including catenanes and knotted rings. Type II topoisomerases break and join 2 DNA strands simultaneously in an ATP-dependent manner. This Neisseria gonorrhoeae protein is DNA gyrase subunit A.